A 1596-amino-acid polypeptide reads, in one-letter code: Cellulose synthase 2 (1596 aa).

Positions 1 to 749 are catalytic; that stretch reads MIYRAILKRL…RSARHGATAS (749 aa). The next 2 membrane-spanning stretches (helical) occupy residues 25-45 and 106-126; these read SPFV…GVTI and LSLL…LSYF. Residues 145 to 238 are catalytic subdomain A; that stretch reads DWPVVDVYVP…YVVIFDCDHI (94 aa). The active site involves aspartate 187. Aspartate 234 and aspartate 236 together coordinate substrate. The segment at 315–375 is catalytic subdomain B; sequence SAVLGIGGFA…GQRVRWARGM (61 aa). Aspartate 331 is an active-site residue. 4 consecutive transmembrane segments (helical) span residues 396 to 416, 421 to 441, 505 to 525, and 544 to 564; these read LCYL…VFLA, FLFL…VYAF, FDLN…LALV, and FALN…SIAV. The 100-residue stretch at 570–669 folds into the PilZ domain; it reads QIRHKPRVRA…ERQIVEFMFG (100 aa). The cyclic di-GMP binding domain stretch occupies residues 750-1596; that stretch reads LIVLLGLPAA…RVKDTTDASH (847 aa). Disordered stretches follow at residues 769 to 812 and 828 to 868; these read SRAT…IAPA and TGPA…APPI. Over residues 783–809 the composition is skewed to pro residues; it reads VEPPPVNAPPPPSLPQPPGTLPTPPQI. A helical transmembrane segment spans residues 1553–1573; the sequence is LTLYVLGLVGAGLVAAAAVRL.

The protein in the N-terminal section; belongs to the glycosyltransferase 2 family. This sequence in the C-terminal section; belongs to the AcsB/BcsB family.

It is found in the cell inner membrane. The catalysed reaction is [(1-&gt;4)-beta-D-glucosyl](n) + UDP-alpha-D-glucose = [(1-&gt;4)-beta-D-glucosyl](n+1) + UDP + H(+). This Novacetimonas hansenii (Komagataeibacter hansenii) protein is Cellulose synthase 2 (acsAII).